We begin with the raw amino-acid sequence, 54 residues long: Lectin alpha-1 chain (54 aa).

The protein belongs to the leguminous lectin family. In terms of assembly, tetramer of two alpha and two beta chains.

This chain is Lectin alpha-1 chain, found in Lathyrus hirsutus (Rough pea).